The following is a 123-amino-acid chain: Small ribosomal subunit protein uS12 (123 aa).

The tract at residues 1-28 is disordered; sequence MPTIQQLIRNPREPKRTRTKTPALKACP. Asp89 bears the 3-methylthioaspartic acid mark. The tract at residues 104-123 is disordered; it reads TQPVKNRKQRRSHYGAKKPK. The span at 108–123 shows a compositional bias: basic residues; the sequence is KNRKQRRSHYGAKKPK.

The protein belongs to the universal ribosomal protein uS12 family. As to quaternary structure, part of the 30S ribosomal subunit. Contacts proteins S8 and S17. May interact with IF1 in the 30S initiation complex.

In terms of biological role, with S4 and S5 plays an important role in translational accuracy. Its function is as follows. Interacts with and stabilizes bases of the 16S rRNA that are involved in tRNA selection in the A site and with the mRNA backbone. Located at the interface of the 30S and 50S subunits, it traverses the body of the 30S subunit contacting proteins on the other side and probably holding the rRNA structure together. The combined cluster of proteins S8, S12 and S17 appears to hold together the shoulder and platform of the 30S subunit. In Hyphomonas neptunium (strain ATCC 15444), this protein is Small ribosomal subunit protein uS12.